We begin with the raw amino-acid sequence, 267 residues long: MKLVKPKKFLGQHFLKDLKVAQDIADTVDTFPELPVLEVGPGMGVLTQFLVKKDRLVKVVEVDYESVAYLREAYPSLEDHIIEDDFLKMNLHRLFDGKPFVLTGNYPYNISSQIFFKMLENKDIIPCCTGMIQKEVAERIAAGPGSKTYGILSVLIQAWYKVEYLFTVSEHVFNPPPKVKSAVIRMTRNDTKELGCDEKLFKQVVKTTFNQRRKTLRNSIKPILGKDCPLTEDALFNKRPEQLSVEEFISLTNQVEEALKTATASGN.

S-adenosyl-L-methionine-binding residues include His-13, Leu-15, Gly-40, Glu-61, Asp-85, and Asn-105.

It belongs to the class I-like SAM-binding methyltransferase superfamily. rRNA adenine N(6)-methyltransferase family. RsmA subfamily.

It localises to the cytoplasm. The catalysed reaction is adenosine(1518)/adenosine(1519) in 16S rRNA + 4 S-adenosyl-L-methionine = N(6)-dimethyladenosine(1518)/N(6)-dimethyladenosine(1519) in 16S rRNA + 4 S-adenosyl-L-homocysteine + 4 H(+). Specifically dimethylates two adjacent adenosines (A1518 and A1519) in the loop of a conserved hairpin near the 3'-end of 16S rRNA in the 30S particle. May play a critical role in biogenesis of 30S subunits. The protein is Ribosomal RNA small subunit methyltransferase A of Bacteroides thetaiotaomicron (strain ATCC 29148 / DSM 2079 / JCM 5827 / CCUG 10774 / NCTC 10582 / VPI-5482 / E50).